Here is a 105-residue protein sequence, read N- to C-terminus: T cell receptor alpha variable 40 (105 aa).

An N-terminal signal peptide occupies residues Met-1–Ser-19. One can recognise an Ig-like domain in the interval Asn-20–Gly-105. Asn-39 is a glycosylation site (N-linked (GlcNAc...) asparagine). An intrachain disulfide couples Cys-40 to Cys-102.

In terms of assembly, alpha-beta TR is a heterodimer composed of an alpha and beta chain; disulfide-linked. The alpha-beta TR is associated with the transmembrane signaling CD3 coreceptor proteins to form the TR-CD3 (TcR or TCR). The assembly of alpha-beta TR heterodimers with CD3 occurs in the endoplasmic reticulum where a single alpha-beta TR heterodimer associates with one CD3D-CD3E heterodimer, one CD3G-CD3E heterodimer and one CD247 homodimer forming a stable octameric structure. CD3D-CD3E and CD3G-CD3E heterodimers preferentially associate with TR alpha and TR beta chains, respectively. The association of the CD247 homodimer is the last step of TcR assembly in the endoplasmic reticulum and is required for transport to the cell surface.

It is found in the cell membrane. Functionally, v region of the variable domain of T cell receptor (TR) alpha chain that participates in the antigen recognition. Alpha-beta T cell receptors are antigen specific receptors which are essential to the immune response and are present on the cell surface of T lymphocytes. Recognize peptide-major histocompatibility (MH) (pMH) complexes that are displayed by antigen presenting cells (APC), a prerequisite for efficient T cell adaptive immunity against pathogens. Binding of alpha-beta TR to pMH complex initiates TR-CD3 clustering on the cell surface and intracellular activation of LCK that phosphorylates the ITAM motifs of CD3G, CD3D, CD3E and CD247 enabling the recruitment of ZAP70. In turn ZAP70 phosphorylates LAT, which recruits numerous signaling molecules to form the LAT signalosome. The LAT signalosome propagates signal branching to three major signaling pathways, the calcium, the mitogen-activated protein kinase (MAPK) kinase and the nuclear factor NF-kappa-B (NF-kB) pathways, leading to the mobilization of transcription factors that are critical for gene expression and essential for T cell growth and differentiation. The T cell repertoire is generated in the thymus, by V-(D)-J rearrangement. This repertoire is then shaped by intrathymic selection events to generate a peripheral T cell pool of self-MH restricted, non-autoaggressive T cells. Post-thymic interaction of alpha-beta TR with the pMH complexes shapes TR structural and functional avidity. This Homo sapiens (Human) protein is T cell receptor alpha variable 40.